The sequence spans 214 residues: Thiamine-phosphate synthase (214 aa).

4-amino-2-methyl-5-(diphosphooxymethyl)pyrimidine is bound by residues 40-44 (QLREK) and asparagine 72. Aspartate 73 and aspartate 92 together coordinate Mg(2+). Serine 110 provides a ligand contact to 4-amino-2-methyl-5-(diphosphooxymethyl)pyrimidine. A 2-[(2R,5Z)-2-carboxy-4-methylthiazol-5(2H)-ylidene]ethyl phosphate-binding site is contributed by 137–139 (SPT). Lysine 140 contacts 4-amino-2-methyl-5-(diphosphooxymethyl)pyrimidine. Residues glycine 167 and 185–186 (IS) contribute to the 2-[(2R,5Z)-2-carboxy-4-methylthiazol-5(2H)-ylidene]ethyl phosphate site.

It belongs to the thiamine-phosphate synthase family. Mg(2+) is required as a cofactor.

The catalysed reaction is 2-[(2R,5Z)-2-carboxy-4-methylthiazol-5(2H)-ylidene]ethyl phosphate + 4-amino-2-methyl-5-(diphosphooxymethyl)pyrimidine + 2 H(+) = thiamine phosphate + CO2 + diphosphate. It catalyses the reaction 2-(2-carboxy-4-methylthiazol-5-yl)ethyl phosphate + 4-amino-2-methyl-5-(diphosphooxymethyl)pyrimidine + 2 H(+) = thiamine phosphate + CO2 + diphosphate. It carries out the reaction 4-methyl-5-(2-phosphooxyethyl)-thiazole + 4-amino-2-methyl-5-(diphosphooxymethyl)pyrimidine + H(+) = thiamine phosphate + diphosphate. It participates in cofactor biosynthesis; thiamine diphosphate biosynthesis; thiamine phosphate from 4-amino-2-methyl-5-diphosphomethylpyrimidine and 4-methyl-5-(2-phosphoethyl)-thiazole: step 1/1. Condenses 4-methyl-5-(beta-hydroxyethyl)thiazole monophosphate (THZ-P) and 2-methyl-4-amino-5-hydroxymethyl pyrimidine pyrophosphate (HMP-PP) to form thiamine monophosphate (TMP). In Wolinella succinogenes (strain ATCC 29543 / DSM 1740 / CCUG 13145 / JCM 31913 / LMG 7466 / NCTC 11488 / FDC 602W) (Vibrio succinogenes), this protein is Thiamine-phosphate synthase.